The sequence spans 276 residues: Putative hydro-lyase Xaut_1503 (276 aa).

Belongs to the D-glutamate cyclase family.

This chain is Putative hydro-lyase Xaut_1503, found in Xanthobacter autotrophicus (strain ATCC BAA-1158 / Py2).